The following is a 305-amino-acid chain: E3 ubiquitin-protein ligase RNF115 (305 aa).

Position 2 is an N-acetylalanine (Ala2). Residues 100–110 (NRANERGHQTH) show a composition bias toward basic and acidic residues. The segment at 100–139 (NRANERGHQTHTDFWGPSRPPRLPMTRRYRSRGSTRPDRS) is disordered. The residue at position 133 (Ser133) is a Phosphoserine. The RING-type zinc-finger motif lies at 229–270 (CPVCKEDYTVEEKVRQLPCNHFFHSSCIVPWLELHDTCPVCR). Positions 274–305 (NGEDSTRQTQSSEASASNRFSNDSQLHDRWTF) are disordered. Polar residues predominate over residues 280-297 (RQTQSSEASASNRFSNDS).

Interacts with RAB7A. Interacts with EGFR and FLT3. Interacts with BST2. Interacts with STX17. Interacts with YWHAE. Phosphorylated by AKT1, allowing association with the 14-3-3 chaperones that facilitates associating with TLRs. In terms of processing, deubiquitinated by USP9X; antogonizing its autoubiquitination and subsequent proteasomal degradation. Post-translationally, RING-type zinc finger-dependent and E2-dependent autoubiquitination.

It is found in the cytoplasm. The protein localises to the cytoplasmic vesicle. Its subcellular location is the phagosome. It localises to the nucleus. The protein resides in the endoplasmic reticulum. It is found in the golgi apparatus. The enzyme catalyses S-ubiquitinyl-[E2 ubiquitin-conjugating enzyme]-L-cysteine + [acceptor protein]-L-lysine = [E2 ubiquitin-conjugating enzyme]-L-cysteine + N(6)-ubiquitinyl-[acceptor protein]-L-lysine.. It functions in the pathway protein modification; protein ubiquitination. Functionally, E3 ubiquitin-protein ligase that catalyzes the 'Lys-48'- and/or 'Lys-63'-linked polyubiquitination of various substrates and thereby plays a role in a number of signaling pathways including autophagy, innate immunity, cell proliferation and cell death. Plays a role in the endosomal trafficking and degradation of membrane receptors including EGFR, FLT3, MET and CXCR4 through their polyubiquitination. Participates together with BST2 in antiviral immunity by facilitating the internalization of HIV-1 virions into intracellular vesicles leading to their lysosomal degradation. Also possesses an antiviral activity independently of BST2 by promoting retroviral GAG proteins ubiquitination, redistribution to endo-lysosomal compartments and, ultimately, lysosomal degradation. Catalyzes distinct types of ubiquitination on MAVS and STING1 at different phases of viral infection to promote innate antiviral response. Mediates the 'Lys-48'-linked ubiquitination of MAVS leading to its proteasomal degradation and ubiquitinates STING1 via 'Lys-63'-linked polyubiquitination, critical for its oligomerization and the subsequent recruitment of TBK1. Plays a positive role in the autophagosome-lysosome fusion by interacting with STX17 and enhancing its stability without affecting 'Lys-48'- or 'Lys-63'-linked polyubiquitination levels, which in turn promotes autophagosome maturation. Negatively regulates TLR-induced expression of proinflammatory cytokines by catalyzing 'Lys-11'-linked ubiquitination of RAB1A and RAB13 to inhibit post-ER trafficking of TLRs to the Golgi by RAB1A and subsequently from the Golgi apparatus to the cell surface by RAB13. This is E3 ubiquitin-protein ligase RNF115 from Mus musculus (Mouse).